Consider the following 506-residue polypeptide: Maturase K (506 aa).

It belongs to the intron maturase 2 family. MatK subfamily.

The protein localises to the plastid. It localises to the chloroplast. In terms of biological role, usually encoded in the trnK tRNA gene intron. Probably assists in splicing its own and other chloroplast group II introns. The protein is Maturase K of Erica tetralix (Cross-leaved heath).